Here is a 685-residue protein sequence, read N- to C-terminus: MSAQDFLVELGSEELPPKALKSLATAFLAGIEKGLAAAGLEYRVARFYAAPRRLAVLVEHLVAQQPDRTLNLDGPPVAAAFDAEGNPTQAALGFARKCGVELHEIDSSGAKLRYSRHIPGQPASALLPAIVQASLDELPIPKRMRWGTRKEEFVRPSQWLVMLFGNQVVDCEILAQKAGRESMGHRFHHPDAVRISQPSSYLEDLRSAYVLADFAERRELIAGRVADLAAQQQGSAVVPEDLLDEVTALVEWPVPLVCSFEERFLTVPQEALISTMQDNQKYFCLLDANGKLLPCFITVANIESRDPAQIVAGNEKVVRPRLTDAEFFFNQDKRQPLESFNQRLASVVFQAQLGSVLEKAERVSRLAGFIAERIGGDPQHAIRAGLLSKADLASEMVGEFPELQGIAGYHYALNAGEPEDIARALDEQYMPRGAGAQLPSTLTGAAVAMADKLDTLVGIFGIGMPPTGSKDPYALRRAALGILRILIEKQLDLNLEEASHFAVAQYGTKVKASGLAEQVSEFVFDRLRARYEDEGIDVSSYLAVRALQPASAYDLDLRVQAVQAFRRLPEAEALAAVNKRVSNLLGKYEGKLPAAIEARYFDNASEFSLYSALQQAQHAVRPLAAERRYREALERLASLRDPVDAYFEAVLVNAEDPAIRANRHAMLAQLRGLFLCVADISVLGQ.

The protein belongs to the class-II aminoacyl-tRNA synthetase family. In terms of assembly, tetramer of two alpha and two beta subunits.

The protein resides in the cytoplasm. It catalyses the reaction tRNA(Gly) + glycine + ATP = glycyl-tRNA(Gly) + AMP + diphosphate. The chain is Glycine--tRNA ligase beta subunit from Azotobacter vinelandii (strain DJ / ATCC BAA-1303).